The sequence spans 181 residues: MSRMKQKYNDIVPALREECGVQNTMQTPKLEKIVISVGAGEEGRDSKLIANMADTISLIAGQKAVIVNAKKSVAGFKAREGAPSGIRVTLRGDNMYNFFDKLVSIALPRVKDFRGTPRKGFDGRGNYNFGLQEQLMFPEVEFDNIIKTHGMNITIVTSTEDDKQAFTLLEKLGMPFAKGRN.

The protein belongs to the universal ribosomal protein uL5 family. As to quaternary structure, part of the 50S ribosomal subunit; part of the 5S rRNA/L5/L18/L25 subcomplex. Contacts the 5S rRNA and the P site tRNA. Forms a bridge to the 30S subunit in the 70S ribosome.

Functionally, this is one of the proteins that bind and probably mediate the attachment of the 5S RNA into the large ribosomal subunit, where it forms part of the central protuberance. In the 70S ribosome it contacts protein S13 of the 30S subunit (bridge B1b), connecting the 2 subunits; this bridge is implicated in subunit movement. Contacts the P site tRNA; the 5S rRNA and some of its associated proteins might help stabilize positioning of ribosome-bound tRNAs. This chain is Large ribosomal subunit protein uL5, found in Sulfurovum sp. (strain NBC37-1).